Reading from the N-terminus, the 261-residue chain is Phosphatidylglycerol--prolipoprotein diacylglyceryl transferase (261 aa).

Helical transmembrane passes span 19 to 39, 56 to 76, 92 to 112, 126 to 146, 173 to 193, 199 to 219, and 227 to 247; these read VHWY…LALY, LIFY…MLFY, WRGG…TWIF, FVVP…FING, QLYE…WFSA, FAVS…AEFF, and GFVA…MIII. Arg-139 is an a 1,2-diacyl-sn-glycero-3-phospho-(1'-sn-glycerol) binding site.

This sequence belongs to the Lgt family.

Its subcellular location is the cell inner membrane. The enzyme catalyses L-cysteinyl-[prolipoprotein] + a 1,2-diacyl-sn-glycero-3-phospho-(1'-sn-glycerol) = an S-1,2-diacyl-sn-glyceryl-L-cysteinyl-[prolipoprotein] + sn-glycerol 1-phosphate + H(+). It participates in protein modification; lipoprotein biosynthesis (diacylglyceryl transfer). In terms of biological role, catalyzes the transfer of the diacylglyceryl group from phosphatidylglycerol to the sulfhydryl group of the N-terminal cysteine of a prolipoprotein, the first step in the formation of mature lipoproteins. This Coxiella burnetii (strain Dugway 5J108-111) protein is Phosphatidylglycerol--prolipoprotein diacylglyceryl transferase.